A 358-amino-acid chain; its full sequence is Uroporphyrinogen decarboxylase (358 aa).

Substrate-binding positions include 29 to 33 (RQAGR), Phe48, Asp79, Tyr155, Ser210, and His330.

This sequence belongs to the uroporphyrinogen decarboxylase family. Homodimer.

The protein localises to the cytoplasm. It carries out the reaction uroporphyrinogen III + 4 H(+) = coproporphyrinogen III + 4 CO2. It participates in porphyrin-containing compound metabolism; protoporphyrin-IX biosynthesis; coproporphyrinogen-III from 5-aminolevulinate: step 4/4. Functionally, catalyzes the decarboxylation of four acetate groups of uroporphyrinogen-III to yield coproporphyrinogen-III. The polypeptide is Uroporphyrinogen decarboxylase (Bordetella parapertussis (strain 12822 / ATCC BAA-587 / NCTC 13253)).